The sequence spans 188 residues: Respiratory supercomplex factor 1, mitochondrial (188 aa).

An HIG1 domain is found at 3 to 94; it reads DQADLLESPQ…TERKQRREFE (92 aa). Helical transmembrane passes span 30–46 and 66–83; these read PLIP…LYRA and IYAQ…GMYY. Positions 83–119 form a coiled coil; the sequence is YKTERKQRREFERKVEERKAQEKRDAWLRELEAREKE. A disordered region spans residues 147–171; the sequence is KKEEEEKGVDGNVNQAPQEEGGVKR.

Belongs to the RCF1 family. In terms of assembly, associates with the respiratory chain complex III/complex IV supercomplex.

Its subcellular location is the mitochondrion membrane. In terms of biological role, cytochrome c oxidase subunit which plays a role in assembly of respiratory supercomplexes. The sequence is that of Respiratory supercomplex factor 1, mitochondrial (rcf1) from Talaromyces stipitatus (strain ATCC 10500 / CBS 375.48 / QM 6759 / NRRL 1006) (Penicillium stipitatum).